The primary structure comprises 424 residues: Sulfate adenylyltransferase (424 aa).

It belongs to the sulfate adenylyltransferase family.

The enzyme catalyses sulfate + ATP + H(+) = adenosine 5'-phosphosulfate + diphosphate. The protein operates within sulfur metabolism; hydrogen sulfide biosynthesis; sulfite from sulfate: step 1/3. This is Sulfate adenylyltransferase from Desulfatibacillum aliphaticivorans.